We begin with the raw amino-acid sequence, 1461 residues long: Formin-3 (1461 aa).

2 disordered regions span residues 1–67 (MASK…SDDN) and 431–457 (YREESHTPHGNTTRKTSTPVSNNRPTT). Over residues 12–28 (TSRSIQSRNSSYSTSSN) the composition is skewed to low complexity. Composition is skewed to polar residues over residues 29–53 (ERIGTPSTISLSENSDLSKLQSTND) and 438–457 (PHGNTTRKTSTPVSNNRPTT). Positions 92-508 (SETEQLRKIY…KIQKSMQLLT (417 aa)) constitute a GBD/FH3 domain. An interaction with tea4 region spans residues 137 to 515 (QHTVLDEATY…LLTHTLEALE (379 aa)). A coiled-coil region spans residues 540 to 639 (GTAEEIAEYK…VQNSNEQHLQ (100 aa)). The segment at 683 to 811 (GIPVRVHTPS…EPKIDETSLT (129 aa)) is disordered. The span at 700–718 (SFSGSEISSSPSPLLPDVS) shows a compositional bias: low complexity. The span at 731–784 (SPPPPPPAVIVPTPAPAPIPVPPPAPIMGGPPPPPPPPGVAGAGPPPPPPPPPA) shows a compositional bias: pro residues. Basic and acidic residues predominate over residues 801–811 (PEPKIDETSLT). The FH2 domain occupies 845–1257 (LRDLHKPTRP…RIMSEDRDKL (413 aa)). Disordered stretches follow at residues 1268 to 1337 (AKYR…AEEK) and 1416 to 1461 (ERLQ…RQKQ). Composition is skewed to basic and acidic residues over residues 1273-1315 (KREL…KTGD) and 1325-1337 (MEDLEKPDYAEEK). Polar residues predominate over residues 1445-1454 (TNGSNASNLV).

Belongs to the formin homology family. Interacts with rax2, rho3 and tea4. Interacts with tea1 in the presence of tea4.

It is found in the cytoplasm. It localises to the cell cortex. The protein localises to the cell tip. Involved in controlling polarized cell growth. Required for interphase actin cable formation and microtubule organization. This chain is Formin-3 (for3), found in Schizosaccharomyces pombe (strain 972 / ATCC 24843) (Fission yeast).